Consider the following 204-residue polypeptide: dITP/XTP pyrophosphatase (204 aa).

8-13 (SRNRKK) contributes to the substrate binding site. Asp-73 acts as the Proton acceptor in catalysis. Asp-73 contacts Mg(2+). Residues Ser-74, 155-158 (FGYD), Lys-179, and 184-185 (HR) contribute to the substrate site.

This sequence belongs to the HAM1 NTPase family. As to quaternary structure, homodimer. Mg(2+) serves as cofactor.

The catalysed reaction is XTP + H2O = XMP + diphosphate + H(+). It carries out the reaction dITP + H2O = dIMP + diphosphate + H(+). It catalyses the reaction ITP + H2O = IMP + diphosphate + H(+). Pyrophosphatase that catalyzes the hydrolysis of nucleoside triphosphates to their monophosphate derivatives, with a high preference for the non-canonical purine nucleotides XTP (xanthosine triphosphate), dITP (deoxyinosine triphosphate) and ITP. Seems to function as a house-cleaning enzyme that removes non-canonical purine nucleotides from the nucleotide pool, thus preventing their incorporation into DNA/RNA and avoiding chromosomal lesions. In Mycolicibacterium paratuberculosis (strain ATCC BAA-968 / K-10) (Mycobacterium paratuberculosis), this protein is dITP/XTP pyrophosphatase.